We begin with the raw amino-acid sequence, 64 residues long: Large ribosomal subunit protein bL35 (64 aa).

The segment at methionine 1–histidine 43 is disordered.

This sequence belongs to the bacterial ribosomal protein bL35 family.

The protein is Large ribosomal subunit protein bL35 of Mesoplasma florum (strain ATCC 33453 / NBRC 100688 / NCTC 11704 / L1) (Acholeplasma florum).